Here is a 357-residue protein sequence, read N- to C-terminus: O-methyltransferase pgmB (357 aa).

Residue D206 participates in S-adenosyl-L-methionine binding. Residue H256 is the Proton acceptor of the active site.

This sequence belongs to the class I-like SAM-binding methyltransferase superfamily. Cation-independent O-methyltransferase family.

Its pathway is pigment biosynthesis. The protein operates within secondary metabolite biosynthesis. Its function is as follows. O-methyltransferase; part of the gene cluster that mediates the biosynthesis of pleosporalin A, ascomycone A, as well as a third cryptic naphthoquinone derived pigment, all responsible for the coloration of conidia. Specifically methylates position C-6 of the pgmA product 3-acetonyl-1,6,8-trihydroxy-2-naphthaldehyde to yield fusarubinaldehyde. The pathway begins with the biosynthesis of the cyclized heptaketide 3-acetonyl-1,6,8-trihydroxy-2-naphthaldehyde by the NR-PKS pgmA. The C-6 hydroxyl group is further methylated by the O-methyltransferase pgmB to yield fusarubinaldehyde which is in turn oxidized by the cytochrome P450 monooxygenase pgmC at C-9. The C-1 hydroxyl group is then methylated spontaneously. Although pgmE, pgmD and pgmH are essential for the production of pleosporalin A, it is not the case for the 2 other final products and it remains difficult to assign a specific function to each enzyme. PgmF and pgmG seem not to be involved in pigment biosynthesis although they were regulated by the cluster-specific transcription factor pgmR. This is O-methyltransferase pgmB from Aspergillus terreus (strain NIH 2624 / FGSC A1156).